A 328-amino-acid chain; its full sequence is Tryptophan--tRNA ligase (328 aa).

ATP contacts are provided by residues Gln11–Thr13 and Gly19–Asn20. The short motif at Pro12 to Asn20 is the 'HIGH' region element. An L-tryptophan-binding site is contributed by Asp135. ATP-binding positions include Gly147 to Asp149, Ile186, and Lys195 to Ser199. Residues Lys195–Ser199 carry the 'KMSKS' region motif.

Belongs to the class-I aminoacyl-tRNA synthetase family. In terms of assembly, homodimer.

Its subcellular location is the cytoplasm. The catalysed reaction is tRNA(Trp) + L-tryptophan + ATP = L-tryptophyl-tRNA(Trp) + AMP + diphosphate + H(+). Catalyzes the attachment of tryptophan to tRNA(Trp). In Wolinella succinogenes (strain ATCC 29543 / DSM 1740 / CCUG 13145 / JCM 31913 / LMG 7466 / NCTC 11488 / FDC 602W) (Vibrio succinogenes), this protein is Tryptophan--tRNA ligase.